We begin with the raw amino-acid sequence, 601 residues long: Elongation factor 4 (601 aa).

In terms of domain architecture, tr-type G spans 7–189 (KNIRNFSIVA…AIVTRLPPPQ (183 aa)). GTP contacts are provided by residues 19–24 (DHGKST) and 136–139 (NKID).

This sequence belongs to the TRAFAC class translation factor GTPase superfamily. Classic translation factor GTPase family. LepA subfamily.

It is found in the cell inner membrane. The catalysed reaction is GTP + H2O = GDP + phosphate + H(+). Its function is as follows. Required for accurate and efficient protein synthesis under certain stress conditions. May act as a fidelity factor of the translation reaction, by catalyzing a one-codon backward translocation of tRNAs on improperly translocated ribosomes. Back-translocation proceeds from a post-translocation (POST) complex to a pre-translocation (PRE) complex, thus giving elongation factor G a second chance to translocate the tRNAs correctly. Binds to ribosomes in a GTP-dependent manner. The polypeptide is Elongation factor 4 (Methylocella silvestris (strain DSM 15510 / CIP 108128 / LMG 27833 / NCIMB 13906 / BL2)).